Reading from the N-terminus, the 269-residue chain is Shikimate dehydrogenase (NADP(+)) (269 aa).

Shikimate-binding positions include 17–19 (SKS) and Thr64. Lys68 acts as the Proton acceptor in catalysis. An NADP(+)-binding site is contributed by Glu80. Shikimate is bound by residues Asn89 and Asp105. NADP(+) is bound by residues 130-134 (GAGGA), 154-159 (NRTHAK), and Met213. Position 215 (Tyr215) interacts with shikimate. Gly237 lines the NADP(+) pocket.

This sequence belongs to the shikimate dehydrogenase family. Homodimer.

It catalyses the reaction shikimate + NADP(+) = 3-dehydroshikimate + NADPH + H(+). It participates in metabolic intermediate biosynthesis; chorismate biosynthesis; chorismate from D-erythrose 4-phosphate and phosphoenolpyruvate: step 4/7. In terms of biological role, involved in the biosynthesis of the chorismate, which leads to the biosynthesis of aromatic amino acids. Catalyzes the reversible NADPH linked reduction of 3-dehydroshikimate (DHSA) to yield shikimate (SA). The sequence is that of Shikimate dehydrogenase (NADP(+)) from Neisseria flavescens.